The sequence spans 338 residues: Methionine synthase (338 aa).

Residues His210, Cys212, Glu234, and Cys294 each coordinate Zn(2+).

The protein belongs to the archaeal MetE family. Zn(2+) serves as cofactor.

Its pathway is amino-acid biosynthesis; L-methionine biosynthesis via de novo pathway. Catalyzes the transfer of a methyl group to L-homocysteine resulting in methionine formation. The physiological methyl donor is unknown. This Pyrococcus abyssi (strain GE5 / Orsay) protein is Methionine synthase.